The primary structure comprises 43 residues: DeltaKappa-actitoxin-Avd4b (43 aa).

3 disulfide bridges follow: C4-C39, C6-C32, and C22-C40.

Belongs to the sea anemone type 3 (BDS) potassium channel toxin family.

The protein resides in the secreted. Its subcellular location is the nematocyst. Functionally, acts as a gating modifier on both Kv and Nav ion channels. Voltage-dependently inhibits voltage-gated potassium channels Kv3 (Kv3.1/KCNC1, Kv3.2/KCNC2 and Kv3.4/KCNC4). Slows inactivation of the voltage-gated sodium channel Nav1.7/SCN9A. Inhibits all Kv3.1, Kv3.2 and Kv3.4 by about 50% when tested at a voltage of +40 mV. May act by binding residues in voltage-sensing domains S3b and S4 of Kv3. Tests have been done on human Nav1.7/SCN9A and rat SCG neurons that mostly carry Nav1.7 channels (EC(50)=300 nM). This toxin also reduces blood pressure. In Anemonia sulcata (Mediterranean snakelocks sea anemone), this protein is DeltaKappa-actitoxin-Avd4b.